Reading from the N-terminus, the 570-residue chain is Pantothenate kinase 2, mitochondrial (570 aa).

A mitochondrion-targeting transit peptide spans 1–31 (MRRLGPFHPRVHWAAPPSLSSGLHRLLFLRG). Disordered regions lie at residues 34 to 94 (IPSS…PRAR) and 127 to 198 (GRLG…SVSR). The Nucleolar localization signal signature appears at 82 to 94 (RWRNGRGGRPRAR). The span at 84–93 (RNGRGGRPRA) shows a compositional bias: basic residues. Residues 155–164 (PEGRRQEPLR) are compositionally biased toward basic and acidic residues. Phosphoserine is present on residues serine 168, serine 169, and serine 189. Residues 168-179 (SSASVPAVGASA) show a composition bias toward low complexity. Residues 268–275 (LELKDLTL) carry the Nuclear export signal motif. Residue glutamate 338 is the Proton acceptor of the active site. Positions 392, 395, and 407 each coordinate acetyl-CoA.

The protein belongs to the type II pantothenate kinase family. Homodimer. Synthesized as a 62-kDa precursor which is proteolytically processed by the mitochondrial-processing peptidase (MPP) via a 59-kDa intermediate to yield the mature mitochondrial 48-kDa subunit. As to expression, expressed in the brain (at protein level). Ubiquitous. Highly expressed in the testis. Expressed in the umbilical vein endothelial cells (HUVEC).

The protein localises to the mitochondrion. The protein resides in the mitochondrion intermembrane space. It localises to the nucleus. It is found in the cytoplasm. It catalyses the reaction (R)-pantothenate + ATP = (R)-4'-phosphopantothenate + ADP + H(+). The protein operates within cofactor biosynthesis; coenzyme A biosynthesis; CoA from (R)-pantothenate: step 1/5. Its activity is regulated as follows. Strongly inhibited by acetyl-CoA and its thioesters. Activated by palmitoylcarnitine. Mitochondrial isoform that catalyzes the phosphorylation of pantothenate to generate 4'-phosphopantothenate in the first and rate-determining step of coenzyme A (CoA) synthesis. Required for angiogenic activity of umbilical vein of endothelial cells (HUVEC). Functionally, cytoplasmic isoform that catalyzes the phosphorylation of pantothenate to generate 4'-phosphopantothenate in the first and rate-determining step of coenzyme A (CoA) synthesis. This Homo sapiens (Human) protein is Pantothenate kinase 2, mitochondrial (PANK2).